Reading from the N-terminus, the 260-residue chain is 5'-nucleotidase SurE (260 aa).

A divalent metal cation-binding residues include aspartate 8, aspartate 9, serine 39, and asparagine 96.

It belongs to the SurE nucleotidase family. A divalent metal cation serves as cofactor.

The protein resides in the cytoplasm. The enzyme catalyses a ribonucleoside 5'-phosphate + H2O = a ribonucleoside + phosphate. Its function is as follows. Nucleotidase that shows phosphatase activity on nucleoside 5'-monophosphates. This Moorella thermoacetica (strain ATCC 39073 / JCM 9320) protein is 5'-nucleotidase SurE.